We begin with the raw amino-acid sequence, 414 residues long: Putative competence-damage inducible protein (414 aa).

It belongs to the CinA family.

This chain is Putative competence-damage inducible protein, found in Limosilactobacillus fermentum (strain NBRC 3956 / LMG 18251) (Lactobacillus fermentum).